Reading from the N-terminus, the 364-residue chain is Protein PTOV1 homolog (364 aa).

Positions 187–207 (AKRKPGVKTPKQPQPEEPPPV) are disordered.

This sequence belongs to the Mediator complex subunit 25 family. PTOV1 subfamily.

The sequence is that of Protein PTOV1 homolog from Drosophila melanogaster (Fruit fly).